The primary structure comprises 144 residues: Gas vesicle protein A1 (144 aa).

The tract at residues 72-144 is disordered; that stretch reads EAGPRKDPGL…APSRRKEEQE (73 aa). Residues 113–127 are compositionally biased toward basic and acidic residues; it reads KQARDDGGSERETSS.

The protein belongs to the gas vesicle GvpA family. As to quaternary structure, the gas vesicle shell is 2 nm thick and consists of a single layer of this protein. It forms helical ribs nearly perpendicular to the long axis of the vesicle.

Its subcellular location is the gas vesicle shell. Gas vesicles are hollow, gas filled proteinaceous nanostructures found in some microorganisms. During planktonic growth they allow positioning of the organism at a favorable depth for light or nutrient acquisition. GvpA forms the protein shell. It is not clear what function GVs perform in soil bacteria. The polypeptide is Gas vesicle protein A1 (Streptomyces coelicolor (strain ATCC BAA-471 / A3(2) / M145)).